Reading from the N-terminus, the 598-residue chain is MQAIKLVVVGDGAVGKSCLLIAYTTNAFPGEYVPTVFDNYSANVMIDGKPFNLGLWDTAGQEDYDRLRPLSYPQTDVFLICFSIVSRASFENIRAKWYPEILHHAPNIPIVLVGTKNDLRGHHDLKRPEVSAAEANNLVRELGFSGYVETSALLQTNLRELFSLAIRTATSPKSASAKKKGGFFSSSSSSSSSSSSKSSEKSVPIPPVMPPAGKAPWIDIITSSYDKEMRETLNSESFSDVKFTFFEERPVYAHRVILCSASEFFRRVFGYTLSSDQAEFKLDDLNEGKVKNIRSVTIKPNEKNDDGTKSSGEFVEISIDSSINRRVFNRFIEFLYTGVLNYLDKNDQLQETIALAESVGFKYLASACKNVLGGNEDLNPSIGTFLNDQLGETSKELFFTKKILSDIQFIVEGRSIFAHKALIFSRSNVVNALIGRNFIEREGKVEMSDDVTFDSFMAILEYLYTAHAPIEEGDSVGILVLGNRFDLRRLVSLCELYISKEIERATTIGIFRSELDIIGLLICAQRHNAPQLEKFCLHFISSNYQPMRRRKEFALLDDKTKKHIEDNQWPPIHYLRAVEDYEKEMEKLKSSSKGWFKK.

11–17 contributes to the GTP binding site; sequence DGAVGKS. The short motif at 32–40 is the Effector region element; that stretch reads YVPTVFDNY. GTP is bound by residues 57–61 and 115–118; these read DTAGQ and TKND. The disordered stretch occupies residues 175–210; it reads ASAKKKGGFFSSSSSSSSSSSSKSSEKSVPIPPVMP. Residues 182-197 are compositionally biased toward low complexity; it reads GFFSSSSSSSSSSSSK. BTB domains are found at residues 239-344 and 405-472; these read SDVK…NYLD and SDIQ…PIEE.

The protein in the N-terminal section; belongs to the small GTPase superfamily. Rho family. In terms of assembly, interacts with pakB.

In Dictyostelium discoideum (Social amoeba), this protein is Rho-related protein racA (racA).